The sequence spans 94 residues: DNA-binding protein HU (94 aa).

Belongs to the bacterial histone-like protein family. Homodimer.

Histone-like DNA-binding protein which is capable of wrapping DNA to stabilize it, and thus to prevent its denaturation under extreme environmental conditions. This Helicobacter pylori (strain J99 / ATCC 700824) (Campylobacter pylori J99) protein is DNA-binding protein HU (hup).